The primary structure comprises 512 residues: GMP synthase [glutamine-hydrolyzing] (512 aa).

Positions 9–198 constitute a Glutamine amidotransferase type-1 domain; the sequence is GVLVVDFGGQ…WLSLVGAPRT (190 aa). Cys87 functions as the Nucleophile in the catalytic mechanism. Residues His173 and Glu175 contribute to the active site. Positions 199–387 constitute a GMPS ATP-PPase domain; it reads WRPGDMVSEL…LGVPRELIWK (189 aa). Residue 226–232 participates in ATP binding; the sequence is SGGVDST.

It catalyses the reaction XMP + L-glutamine + ATP + H2O = GMP + L-glutamate + AMP + diphosphate + 2 H(+). The protein operates within purine metabolism; GMP biosynthesis; GMP from XMP (L-Gln route): step 1/1. Catalyzes the synthesis of GMP from XMP. This chain is GMP synthase [glutamine-hydrolyzing] (guaA), found in Aeropyrum pernix (strain ATCC 700893 / DSM 11879 / JCM 9820 / NBRC 100138 / K1).